Reading from the N-terminus, the 160-residue chain is Dysbindin domain-containing protein 1 (160 aa).

2 disordered regions span residues M1–C34 and A95–D160. 3 positions are modified to phosphoserine: S3, S97, and S121. A compositionally biased stretch (basic and acidic residues) spans T127–R143.

Belongs to the dysbindin family.

The protein is Dysbindin domain-containing protein 1 (Dbndd1) of Rattus norvegicus (Rat).